The primary structure comprises 192 residues: Adenylate kinase (192 aa).

10–18 lines the ATP pocket; that stretch reads GVPGVGKTT.

The protein belongs to the archaeal adenylate kinase family.

The protein resides in the cytoplasm. It carries out the reaction AMP + ATP = 2 ADP. In Methanoculleus marisnigri (strain ATCC 35101 / DSM 1498 / JR1), this protein is Adenylate kinase.